We begin with the raw amino-acid sequence, 122 residues long: Large ribosomal subunit protein uL14 (122 aa).

Belongs to the universal ribosomal protein uL14 family. As to quaternary structure, part of the 50S ribosomal subunit. Forms a cluster with proteins L3 and L19. In the 70S ribosome, L14 and L19 interact and together make contacts with the 16S rRNA in bridges B5 and B8.

Functionally, binds to 23S rRNA. Forms part of two intersubunit bridges in the 70S ribosome. The protein is Large ribosomal subunit protein uL14 of Clostridioides difficile (strain 630) (Peptoclostridium difficile).